Here is a 398-residue protein sequence, read N- to C-terminus: MQYVREMSSDLATFASGLLALFERSAGVPLRELALVGLTAAIITYFATGLVGVLANRLEAVAYPRERDVHVTPTPRMGGLAMYLGVLAAVFLASQLPALTRGFVYSSGMPAVLVAGAVITGIGLIDDRWGLDALTKFAGQITAASVLVTMGVAWSVLYIPLGGVGTIVLDQTSSILLTLALTVSIVNAINFVDGLDGLAAGLGLITAMAICIFSVGLLRDHDGDVLFYPPAVISVVLAGSCLGFLPHNFHRAKIFMGDSGSMLVGLMLAAASTTAAGPISQNAYGTRDVFALLSPFLLVVAVMFVPMLDLLLAIVRRIRAGRSAFSPDKMHLHHRLLQIGHSHRRVVLLIYLWVGIVAFGAASTIFFNPRNTGAVMLGAIVITGMATVIPLLRRRDNY.

The next 11 membrane-spanning stretches (helical) occupy residues 33–53 (LALVGLTAAIITYFATGLVGV), 79–99 (GLAMYLGVLAAVFLASQLPAL), 105–125 (YSSGMPAVLVAGAVITGIGLI), 148–168 (VTMGVAWSVLYIPLGGVGTIV), 175–195 (ILLTLALTVSIVNAINFVDGL), 198–218 (LAAGLGLITAMAICIFSVGLL), 225–245 (VLFYPPAVISVVLAGSCLGFL), 260–280 (GSMLVGLMLAAASTTAAGPIS), 295–315 (PFLLVVAVMFVPMLDLLLAIV), 347–367 (VLLIYLWVGIVAFGAASTIFF), and 372–392 (TGAVMLGAIVITGMATVIPLL).

Belongs to the glycosyltransferase 4 family. WecA subfamily. Mg(2+) is required as a cofactor. Requires Mn(2+) as cofactor.

It localises to the cell membrane. It catalyses the reaction trans,octa-cis-decaprenyl phosphate + UDP-N-acetyl-alpha-D-glucosamine = N-acetyl-alpha-D-glucosaminyl-1-diphospho-trans,octa-cis-decaprenol + UMP. The protein operates within cell wall biogenesis; cell wall polysaccharide biosynthesis. Involved in the biosynthesis of the disaccharide D-N-acetylglucosamine-L-rhamnose which plays an important role in the mycobacterial cell wall as a linker connecting arabinogalactan and peptidoglycan via a phosphodiester linkage. Catalyzes the transfer of the N-acetylglucosamine-1-phosphate (GlcNAc-1P) moiety from UDP-GlcNAc onto the carrier lipid decaprenyl phosphate (C50-P), yielding GlcNAc-pyrophosphoryl-decaprenyl (GlcNAc-PP-C50). This Mycobacterium leprae (strain TN) protein is Decaprenyl-phosphate N-acetylglucosaminephosphotransferase (wecA).